We begin with the raw amino-acid sequence, 449 residues long: Tubulin beta-6 chain (449 aa).

8 residues coordinate GTP: Q11, E69, S138, G142, T143, G144, N204, and N226. Residue E69 participates in Mg(2+) binding. The disordered stretch occupies residues 425 to 449 (YQDATADDEGEYEEDEDEEEILDHE). Residues 429–449 (TADDEGEYEEDEDEEEILDHE) are compositionally biased toward acidic residues.

Belongs to the tubulin family. As to quaternary structure, dimer of alpha and beta chains. A typical microtubule is a hollow water-filled tube with an outer diameter of 25 nm and an inner diameter of 15 nM. Alpha-beta heterodimers associate head-to-tail to form protofilaments running lengthwise along the microtubule wall with the beta-tubulin subunit facing the microtubule plus end conferring a structural polarity. Microtubules usually have 13 protofilaments but different protofilament numbers can be found in some organisms and specialized cells. Mg(2+) is required as a cofactor.

Its subcellular location is the cytoplasm. The protein localises to the cytoskeleton. Tubulin is the major constituent of microtubules, a cylinder consisting of laterally associated linear protofilaments composed of alpha- and beta-tubulin heterodimers. Microtubules grow by the addition of GTP-tubulin dimers to the microtubule end, where a stabilizing cap forms. Below the cap, tubulin dimers are in GDP-bound state, owing to GTPase activity of alpha-tubulin. The sequence is that of Tubulin beta-6 chain (TUBB6) from Arabidopsis thaliana (Mouse-ear cress).